The following is a 396-amino-acid chain: N-acyl-phosphatidylethanolamine-hydrolyzing phospholipase D (396 aa).

Methionine 1 is modified (N-acetylmethionine). Polar residues-rich tracts occupy residues 1 to 12 (MDENENSQSPAP) and 26 to 37 (NSVQNSGGSESS). Residues 1 to 41 (MDENENSQSPAPSHQYPKETLRKRQNSVQNSGGSESSRLSR) form a disordered region. Zn(2+) contacts are provided by histidine 185 and histidine 187. Tyrosine 188 contacts an N-acyl-1,2-diacyl-sn-glycero-3-phosphoethanolamine. Positions 189, 190, and 253 each coordinate Zn(2+). Lysine 256 is a binding site for deoxycholate. Zn(2+) is bound at residue aspartate 284. Residue histidine 321 participates in an N-acyl-1,2-diacyl-sn-glycero-3-phosphoethanolamine binding. Residue histidine 343 coordinates Zn(2+). Alanine 348 serves as a coordination point for deoxycholate.

This sequence belongs to the NAPE-PLD family. As to quaternary structure, homodimer. Bile acids promote the assembly of inactive monomers into an active dimer and enable catalysis. Zn(2+) is required as a cofactor. As to expression, widely expressed. Highest expression in brain, kidney and testis (at protein level). Expressed in adipose tissue (at protein level).

It localises to the golgi apparatus membrane. Its subcellular location is the early endosome membrane. The protein localises to the nucleus envelope. The protein resides in the nucleus. It is found in the nucleoplasm. It carries out the reaction an N-acyl-1,2-diacyl-sn-glycero-3-phosphoethanolamine + H2O = an N-acylethanolamine + a 1,2-diacyl-sn-glycero-3-phosphate + H(+). The catalysed reaction is N-butanoyl-1-hexadecanoyl-2-(9Z,12Z-octadecadienoyl)-sn-glycero-3-phosphoethanolamine + H2O = N-butanoyl ethanolamine + 1-hexadecanoyl-2-(9Z,12Z-octadecadienoyl)-sn-glycero-3-phosphate + H(+). The enzyme catalyses N-hexanoyl-1-hexadecanoyl-2-(9Z,12Z-octadecadienoyl)-sn-glycero-3-phosphoethanolamine + H2O = N-hexanoyl ethanolamine + 1-hexadecanoyl-2-(9Z,12Z-octadecadienoyl)-sn-glycero-3-phosphate + H(+). It catalyses the reaction N-octanoyl-1-hexadecanoyl-2-(9Z,12Z-octadecadienoyl)-sn-glycero-3-phosphoethanolamine + H2O = N-octanoyl ethanolamine + 1-hexadecanoyl-2-(9Z,12Z-octadecadienoyl)-sn-glycero-3-phosphate + H(+). It carries out the reaction N-decanoyl-1-hexadecanoyl-2-(9Z,12Z-octadecadienoyl)-sn-glycero-3-phosphoethanolamine + H2O = N-decanoyl ethanolamine + 1-hexadecanoyl-2-(9Z,12Z-octadecadienoyl)-sn-glycero-3-phosphate + H(+). The catalysed reaction is N-dodecanoyl-1,2-di-(9Z-octadecenoyl)-sn-glycero-3-phosphoethanolamine + H2O = N-dodecanoylethanolamine + 1,2-di-(9Z-octadecenoyl)-sn-glycero-3-phosphate + H(+). The enzyme catalyses N-tetradecanoyl-1,2-di-(9Z-octadecenoyl)-sn-glycero-3-phosphoethanolamine + H2O = N-tetradecanoylethanolamine + 1,2-di-(9Z-octadecenoyl)-sn-glycero-3-phosphate + H(+). It catalyses the reaction N-hexadecanoyl-1,2-di-(9Z-octadecenoyl)-sn-glycero-3-phosphoethanolamine + H2O = N-hexadecanoylethanolamine + 1,2-di-(9Z-octadecenoyl)-sn-glycero-3-phosphate + H(+). It carries out the reaction N,1-dihexadecanoyl-2-(9Z,12Z-octadecadienoyl)-sn-glycero-3-phosphoethanolamine + H2O = 1-hexadecanoyl-2-(9Z,12Z-octadecadienoyl)-sn-glycero-3-phosphate + N-hexadecanoylethanolamine + H(+). The catalysed reaction is N-octadecanoyl-1,2-di-(9Z-octadecenoyl)-sn-glycero-3-phosphoethanolamine + H2O = N-octadecanoyl ethanolamine + 1,2-di-(9Z-octadecenoyl)-sn-glycero-3-phosphate + H(+). The enzyme catalyses N,1,2-tri-(9Z-octadecenoyl)-sn-glycero-3-phosphoethanolamine + H2O = N-(9Z-octadecenoyl) ethanolamine + 1,2-di-(9Z-octadecenoyl)-sn-glycero-3-phosphate + H(+). It catalyses the reaction N-(5Z,8Z,11Z,14Z-eicosatetraenoyl)-1,2-diacyl-sn-glycero-3-phosphoethanolamine + H2O = N-(5Z,8Z,11Z,14Z-eicosatetraenoyl)-ethanolamine + a 1,2-diacyl-sn-glycero-3-phosphate + H(+). It carries out the reaction N-(5Z,8Z,11Z,14Z-eicosatetraenoyl)-1,2-di-(9Z-octadecenoyl)-sn-glycero-3-phosphoethanolamine + H2O = N-(5Z,8Z,11Z,14Z-eicosatetraenoyl)-ethanolamine + 1,2-di-(9Z-octadecenoyl)-sn-glycero-3-phosphate + H(+). The catalysed reaction is 1-O-(1Z-octadecenoyl)-2-(9Z-octadecenoyl)-sn-glycero-3-phospho-N-hexadecanoyl-ethanolamine + H2O = 1-O-(1Z-octadecenoyl)-2-(9Z-octadecenoyl)-sn-glycero-3-phosphate + N-hexadecanoylethanolamine + H(+). The enzyme catalyses N,1-diacyl-sn-glycero-3-phosphoethanolamine + H2O = an N-acylethanolamine + a 1-acyl-sn-glycero-3-phosphate + H(+). It catalyses the reaction N,1-dihexadecanoyl-sn-glycero-3-phosphoethanolamine + H2O = N-hexadecanoylethanolamine + 1-hexadecanoyl-sn-glycero-3-phosphate + H(+). It carries out the reaction N-(5Z,8Z,11Z,14Z-eicosatetraenoyl)-1-(9Z-octadecenoyl)-sn-glycero-3-phosphoethanolamine + H2O = N-(5Z,8Z,11Z,14Z-eicosatetraenoyl)-ethanolamine + 1-(9Z-octadecenoyl)-sn-glycero-3-phosphate + H(+). Activated by divalent cations. Activated by bile acids. Activated by membrane phospholipids such as phosphatidylethanolamines. Inhibited by cardiolipins. D-type phospholipase that hydrolyzes N-acyl-phosphatidylethanolamines (NAPEs) to produce bioactive N-acylethanolamines/fatty acid ethanolamides (NAEs/FAEs) and phosphatidic acid. Cleaves the terminal phosphodiester bond of diacyl- and alkenylacyl-NAPEs, primarily playing a role in the generation of long-chain saturated and monounsaturated NAEs in the brain. May control NAPE homeostasis in dopaminergic neuron membranes and regulate neuron survival, partly through RAC1 activation. As a regulator of lipid metabolism in the adipose tissue, mediates the crosstalk between adipocytes, gut microbiota and immune cells to control body temperature and weight. In particular, regulates energy homeostasis by promoting cold-induced brown or beige adipocyte differentiation program to generate heat from fatty acids and glucose. Has limited D-type phospholipase activity toward N-acyl lyso-NAPEs. The sequence is that of N-acyl-phosphatidylethanolamine-hydrolyzing phospholipase D (Napepld) from Rattus norvegicus (Rat).